Reading from the N-terminus, the 178-residue chain is Gamma-crystallin S (178 aa).

An N-acetylserine modification is found at Ser-2. Positions Ser-2–Gly-5 are N-terminal arm. 2 consecutive Beta/gamma crystallin 'Greek key' domains span residues Gly-6 to Gly-44 and Gly-45 to His-87. Residues Leu-88–Gln-93 form a connecting peptide region. 2 Beta/gamma crystallin 'Greek key' domains span residues Ala-94–Glu-134 and Gly-135–Val-177.

Belongs to the beta/gamma-crystallin family. In terms of assembly, monomer.

Crystallins are the dominant structural components of the vertebrate eye lens. The polypeptide is Gamma-crystallin S (Crygs) (Mus musculus (Mouse)).